A 652-amino-acid chain; its full sequence is Aspartate--tRNA ligase, mitochondrial (652 aa).

The transit peptide at 1 to 46 (MYLGSWLNRLGRGLSRPIGKTKQPIWGSLSRSLTLSSQRVPEFSSF) directs the protein to the mitochondrion. Threonine 218 carries the phosphothreonine modification. Serine 241 is subject to Phosphoserine. Residues 243–246 (QQFK) are aspartate. Arginine 265 contacts L-aspartate. Residues 265–267 (RDE) and glutamate 534 each bind ATP. Residue arginine 541 participates in L-aspartate binding. 583 to 586 (GLDR) provides a ligand contact to ATP.

It belongs to the class-II aminoacyl-tRNA synthetase family. Type 1 subfamily. In terms of assembly, homodimer.

It localises to the mitochondrion matrix. The protein localises to the mitochondrion membrane. It carries out the reaction tRNA(Asp) + L-aspartate + ATP = L-aspartyl-tRNA(Asp) + AMP + diphosphate. Functionally, catalyzes the attachment of aspartate to tRNA(Asp) in a two-step reaction: aspartate is first activated by ATP to form Asp-AMP and then transferred to the acceptor end of tRNA(Asp). In Rattus norvegicus (Rat), this protein is Aspartate--tRNA ligase, mitochondrial (Dars2).